Reading from the N-terminus, the 580-residue chain is Alpha-thujene synthase TPS3, chloroplastic (580 aa).

The transit peptide at 1 to 26 (MALQLLTPSFSFQHSPSPHRLTTLRY) directs the protein to the chloroplast. R296, D333, D337, R473, and D476 together coordinate (2E)-geranyl diphosphate. Residues D333 and D337 each coordinate Mg(2+). Residues 333-337 (DDVYD) carry the DDXXD motif motif. Mg(2+) is bound by residues D476, T480, and E484.

Belongs to the terpene synthase family. Tpsb subfamily. Monomer. It depends on Mg(2+) as a cofactor. Mn(2+) serves as cofactor. In terms of tissue distribution, mostly expressed in developing and mature fruits, and, to a lower extent, in male leaves. Barely detectable in female leaves and shoots.

It localises to the plastid. Its subcellular location is the chloroplast. It catalyses the reaction (2E)-geranyl diphosphate = alpha-thujene + diphosphate. It carries out the reaction (2E)-geranyl diphosphate = (1R,5R)-sabinene + diphosphate. It functions in the pathway secondary metabolite biosynthesis; terpenoid biosynthesis. Functionally, monoterpene synthase (TPS) involved in the biosynthesis of monoterpene natural products used by traditional Chinese medicine to treat headache, inflammation and intoxication. Catalyzes the conversion of (2E)-geranyl diphosphate (GPP) into alpha-thujene and (1R,5R)-sabinene. In Litsea cubeba (Aromatic litsea), this protein is Alpha-thujene synthase TPS3, chloroplastic.